Consider the following 501-residue polypeptide: Lysine--tRNA ligase (501 aa).

Mg(2+) contacts are provided by Glu-411 and Glu-418.

It belongs to the class-II aminoacyl-tRNA synthetase family. As to quaternary structure, homodimer. Mg(2+) serves as cofactor.

The protein resides in the cytoplasm. It catalyses the reaction tRNA(Lys) + L-lysine + ATP = L-lysyl-tRNA(Lys) + AMP + diphosphate. The sequence is that of Lysine--tRNA ligase from Pseudomonas aeruginosa (strain UCBPP-PA14).